The primary structure comprises 393 residues: NAD(P)H-quinone oxidoreductase subunit H, chloroplastic (393 aa).

It belongs to the complex I 49 kDa subunit family. In terms of assembly, NDH is composed of at least 16 different subunits, 5 of which are encoded in the nucleus.

The protein localises to the plastid. Its subcellular location is the chloroplast thylakoid membrane. It catalyses the reaction a plastoquinone + NADH + (n+1) H(+)(in) = a plastoquinol + NAD(+) + n H(+)(out). The catalysed reaction is a plastoquinone + NADPH + (n+1) H(+)(in) = a plastoquinol + NADP(+) + n H(+)(out). In terms of biological role, NDH shuttles electrons from NAD(P)H:plastoquinone, via FMN and iron-sulfur (Fe-S) centers, to quinones in the photosynthetic chain and possibly in a chloroplast respiratory chain. The immediate electron acceptor for the enzyme in this species is believed to be plastoquinone. Couples the redox reaction to proton translocation, and thus conserves the redox energy in a proton gradient. In Gossypium hirsutum (Upland cotton), this protein is NAD(P)H-quinone oxidoreductase subunit H, chloroplastic.